Reading from the N-terminus, the 486-residue chain is Glutamyl-tRNA(Gln) amidotransferase subunit A (486 aa).

Residues lysine 74 and serine 149 each act as charge relay system in the active site. Residue serine 173 is the Acyl-ester intermediate of the active site.

It belongs to the amidase family. GatA subfamily. As to quaternary structure, heterotrimer of A, B and C subunits.

The catalysed reaction is L-glutamyl-tRNA(Gln) + L-glutamine + ATP + H2O = L-glutaminyl-tRNA(Gln) + L-glutamate + ADP + phosphate + H(+). Allows the formation of correctly charged Gln-tRNA(Gln) through the transamidation of misacylated Glu-tRNA(Gln) in organisms which lack glutaminyl-tRNA synthetase. The reaction takes place in the presence of glutamine and ATP through an activated gamma-phospho-Glu-tRNA(Gln). The sequence is that of Glutamyl-tRNA(Gln) amidotransferase subunit A from Prochlorococcus marinus (strain MIT 9303).